Consider the following 310-residue polypeptide: ADP-L-glycero-D-manno-heptose-6-epimerase (310 aa).

NADP(+)-binding positions include 10-11, 31-32, lysine 38, lysine 53, 75-79, and asparagine 92; these read FI, DN, and EGACS. The Proton acceptor role is filled by tyrosine 140. Residue lysine 144 coordinates NADP(+). Position 169 (asparagine 169) interacts with substrate. NADP(+)-binding residues include valine 170 and lysine 178. Catalysis depends on lysine 178, which acts as the Proton acceptor. Residues serine 180, histidine 187, 201-204, arginine 209, and tyrosine 272 each bind substrate; that span reads FEGS.

This sequence belongs to the NAD(P)-dependent epimerase/dehydratase family. HldD subfamily. In terms of assembly, homopentamer. The cofactor is NADP(+).

The enzyme catalyses ADP-D-glycero-beta-D-manno-heptose = ADP-L-glycero-beta-D-manno-heptose. The protein operates within nucleotide-sugar biosynthesis; ADP-L-glycero-beta-D-manno-heptose biosynthesis; ADP-L-glycero-beta-D-manno-heptose from D-glycero-beta-D-manno-heptose 7-phosphate: step 4/4. Catalyzes the interconversion between ADP-D-glycero-beta-D-manno-heptose and ADP-L-glycero-beta-D-manno-heptose via an epimerization at carbon 6 of the heptose. In Salmonella heidelberg (strain SL476), this protein is ADP-L-glycero-D-manno-heptose-6-epimerase.